The primary structure comprises 410 residues: Benzene 1,2-dioxygenase system ferredoxin--NAD(+) reductase subunit (410 aa).

4–35 (HVAIIGNGVAGFTTAQALRAEGYEGRISLIGE) lines the FAD pocket. 145–173 (RLLIVGGGLIGCEVATTARKLGLSVTILE) contacts NAD(+).

Belongs to the bacterial ring-hydroxylating dioxygenase ferredoxin reductase family. As to quaternary structure, this dioxygenase system consists of four proteins: the two subunits of the hydroxylase component (BedC1 and BedC2), a ferredoxin (BedB) and a ferredoxin reductase (BedA). It depends on FAD as a cofactor.

It catalyses the reaction 2 reduced [2Fe-2S]-[ferredoxin] + NAD(+) + H(+) = 2 oxidized [2Fe-2S]-[ferredoxin] + NADH. It participates in aromatic compound metabolism; benzene degradation; catechol from benzene: step 1/2. Functionally, part of the electron transfer component of benzene 1,2-dioxygenase, transfers electrons from ferredoxin to NADH. The polypeptide is Benzene 1,2-dioxygenase system ferredoxin--NAD(+) reductase subunit (bedA) (Pseudomonas putida (Arthrobacter siderocapsulatus)).